Consider the following 369-residue polypeptide: Glycine oxidase (369 aa).

FAD contacts are provided by residues 14 to 15 (II), 34 to 35 (ES), 42 to 43 (AT), 47 to 49 (AGM), and Val-174. The substrate site is built by Arg-302 and Arg-329. 327–333 (HFRNGIL) serves as a coordination point for FAD.

This sequence belongs to the DAO family. ThiO subfamily. As to quaternary structure, homotetramer. The cofactor is FAD.

The enzyme catalyses glycine + O2 + H2O = glyoxylate + H2O2 + NH4(+). The catalysed reaction is glyphosate + O2 + H2O = aminomethylphosphonate + glyoxylate + H2O2 + H(+). It catalyses the reaction N-ethylglycine + O2 + H2O = ethylamine + glyoxylate + H2O2. It carries out the reaction sarcosine + O2 + H2O = methylamine + glyoxylate + H2O2. The enzyme catalyses D-alanine + O2 + H2O = pyruvate + H2O2 + NH4(+). It participates in cofactor biosynthesis; thiamine diphosphate biosynthesis. Its function is as follows. Catalyzes the FAD-dependent oxidative deamination of glycine, leading to glyoxylate, ammonia and hydrogen peroxide. Is also able to act on various amines and D-amino acids to yield the corresponding alpha-keto acids, ammonia/amine, and hydrogen peroxide. Can also oxidize the herbicide glyphosate (N-phosphonomethylglycine), and thus may be involved in the degradation pathway that allows B.licheniformis J33-8 to grow with glyphosate as the sole source of carbon. Is essential for thiamine biosynthesis since the oxidation of glycine catalyzed by ThiO generates the glycine imine intermediate (dehydroglycine) required for the biosynthesis of the thiazole ring of thiamine pyrophosphate. The protein is Glycine oxidase of Bacillus licheniformis.